A 645-amino-acid polypeptide reads, in one-letter code: ATP-dependent zinc metalloprotease FtsH (645 aa).

Residues methionine 1–lysine 6 lie on the Cytoplasmic side of the membrane. The chain crosses the membrane as a helical span at residues phenylalanine 7–leucine 27. Topologically, residues tyrosine 28 to leucine 110 are periplasmic. The helical transmembrane segment at phenylalanine 111–phenylalanine 131 threads the bilayer. Residues alanine 132 to asparagine 645 are Cytoplasmic-facing. Glycine 204–threonine 211 contributes to the ATP binding site. Position 426 (histidine 426) interacts with Zn(2+). Residue glutamate 427 is part of the active site. Positions 430 and 503 each coordinate Zn(2+). A disordered region spans residues serine 623–asparagine 645. Positions glutamate 634–asparagine 645 are enriched in basic and acidic residues.

It in the central section; belongs to the AAA ATPase family. In the C-terminal section; belongs to the peptidase M41 family. As to quaternary structure, homohexamer. Zn(2+) serves as cofactor.

It localises to the cell inner membrane. In terms of biological role, acts as a processive, ATP-dependent zinc metallopeptidase for both cytoplasmic and membrane proteins. Plays a role in the quality control of integral membrane proteins. This is ATP-dependent zinc metalloprotease FtsH from Kosmotoga olearia (strain ATCC BAA-1733 / DSM 21960 / TBF 19.5.1).